Here is a 101-residue protein sequence, read N- to C-terminus: Small ribosomal subunit protein uS14 (101 aa).

This sequence belongs to the universal ribosomal protein uS14 family. As to quaternary structure, part of the 30S ribosomal subunit. Contacts proteins S3 and S10.

Functionally, binds 16S rRNA, required for the assembly of 30S particles and may also be responsible for determining the conformation of the 16S rRNA at the A site. The chain is Small ribosomal subunit protein uS14 from Cupriavidus metallidurans (strain ATCC 43123 / DSM 2839 / NBRC 102507 / CH34) (Ralstonia metallidurans).